The sequence spans 469 residues: Tetratricopeptide repeat protein 38 (469 aa).

Ala-2 is modified (N-acetylalanine). Ser-5 carries the phosphoserine modification. TPR repeat units follow at residues 108–141 (REQL…HPTD), 180–213 (SYVK…NPTD), and 252–285 (CHNY…SLQA).

The protein belongs to the TTC38 family.

The chain is Tetratricopeptide repeat protein 38 (TTC38) from Pongo abelii (Sumatran orangutan).